A 341-amino-acid chain; its full sequence is Solute carrier family 25 member 43 (341 aa).

Solcar repeat units follow at residues 11–101 (TGSQ…MDDL), 105–185 (SQWS…LLVY), and 200–298 (SHLQ…LYQN). Helical transmembrane passes span 16–36 (LLCA…LELA), 68–88 (LWKG…VQLA), 110–130 (IVTG…TDLI), 166–186 (GVSL…LVYM), 205–225 (FANV…FDTV), and 262–282 (VLGL…YFGV).

Belongs to the mitochondrial carrier (TC 2.A.29) family.

It is found in the mitochondrion inner membrane. This is Solute carrier family 25 member 43 (Slc25a43) from Mus musculus (Mouse).